The primary structure comprises 149 residues: Large ribosomal subunit protein bL9 (149 aa).

It belongs to the bacterial ribosomal protein bL9 family.

Functionally, binds to the 23S rRNA. In Acidothermus cellulolyticus (strain ATCC 43068 / DSM 8971 / 11B), this protein is Large ribosomal subunit protein bL9.